Here is a 252-residue protein sequence, read N- to C-terminus: TLC domain-containing protein 1 (252 aa).

The N-terminal stretch at 1–29 (MGPGWRAPSAALVGGSVALFGALRRAALA) is a signal peptide. The Extracellular segment spans residues 30–47 (LPRPAAVRSRPGRVWRWR). Residues 41–235 (GRVWRWRNLL…LLRSDFFPSL (195 aa)) enclose the TLC domain. Residues 48–68 (NLLVSFAHSVLAGLWALFSLW) form a helical membrane-spanning segment. Residues 69–84 (QSPELLSDIQDGYSVS) are Cytoplasmic-facing. A helical transmembrane segment spans residues 85 to 105 (GHLLVCFSSGYFIHDSLDIIF). At 106 to 124 (NQQSRSSWEYLVHHAMAIS) the chain is on the extracellular side. An intramembrane region (helical) is located at residues 125 to 145 (AFVSLIITGRFLVAAMLLLLV). At 146-174 (EVSNIFLTIRMLLKMSNVPSPALYEANKY) the chain is on the extracellular side. The helical transmembrane segment at 175 to 195 (VNLVMYFAFRLAPQVYLTWYF) threads the bilayer. Over 196-202 (VRYVEVQ) the chain is Cytoplasmic. Residues 203 to 223 (GQGAFLMANLLLLDAMILMYF) form a helical membrane-spanning segment. Residues 224–252 (SRLLRSDFFPSLRKGSVGRDVDGEKFLID) are Extracellular-facing.

In terms of assembly, interacts with CACNA1C in vitro; however the relevance of the interaction in vivo is unclear.

Its subcellular location is the cell membrane. Its function is as follows. Regulates the composition and fluidity of the plasma membrane. Inhibits the incorporation of membrane-fluidizing phospholipids containing omega-3 long-chain polyunsaturated fatty acids (LCPUFA) and thereby promotes membrane rigidity. Does not appear to have any effect on LCPUFA synthesis. The protein is TLC domain-containing protein 1 (TLCD1) of Gallus gallus (Chicken).